A 146-amino-acid polypeptide reads, in one-letter code: Hemoglobin subunit beta (146 aa).

The region spanning 2 to 146 (PFSAHEEKLI…VAAALSAEYH (145 aa)) is the Globin domain. 2 residues coordinate heme b: His-63 and His-92.

This sequence belongs to the globin family. Heterotetramer of two alpha chains and two beta chains. Red blood cells.

In terms of biological role, involved in oxygen transport from the lung to the various peripheral tissues. The sequence is that of Hemoglobin subunit beta (HBB) from Caiman crocodilus (Spectacled caiman).